The chain runs to 323 residues: MDSDASLVSSRPSSPEPDDLFLPARSKGSSGSAFTGGTVSSSTPSDCPPELSAELRGAMGSAGAHPGDKLGGSGFKSSSSSTSSSTSSAAASSTKKDKKQMTEPELQQLRLKINSRERKRMHDLNIAMDGLREVMPYAHGPSVRKLSKIATLLLARNYILMLTNSLEEMKRLVSEIYGGHHAGFHPSACGGLAHSAPLPAATAHPAAAAHAAHHPAVHHPILPPAAAAAAAAAAAAAVSSASLPGSGLPSVGSIRPPHGLLKSPSAAAAAPLGGGGGGSGASGGFQHWGGMPCPCSMCQVPPPHHHVSAMGAGSLPRLTSDAK.

Polar residues-rich tracts occupy residues 1–13 and 27–45; these read MDSDASLVSSRPS and KGSSGSAFTGGTVSSSTPS. The segment at 1–107 is disordered; that stretch reads MDSDASLVSS…KKQMTEPELQ (107 aa). Low complexity predominate over residues 76–93; the sequence is KSSSSSTSSSTSSAAASS. A bHLH domain is found at 108–162; it reads QLRLKINSRERKRMHDLNIAMDGLREVMPYAHGPSVRKLSKIATLLLARNYILML.

In terms of assembly, interacts with NKX2-2. Interacts with ZNF488. As to expression, expressed in the brain, in oligodendrocytes. Strongly expressed in oligodendrogliomas, while expression is weak to moderate in astrocytomas. Expression in glioblastomas highly variable.

The protein localises to the nucleus. The protein resides in the cytoplasm. In terms of biological role, required for oligodendrocyte and motor neuron specification in the spinal cord, as well as for the development of somatic motor neurons in the hindbrain. Functions together with ZNF488 to promote oligodendrocyte differentiation. Cooperates with OLIG1 to establish the pMN domain of the embryonic neural tube. Antagonist of V2 interneuron and of NKX2-2-induced V3 interneuron development. The protein is Oligodendrocyte transcription factor 2 (OLIG2) of Homo sapiens (Human).